A 337-amino-acid chain; its full sequence is MDRNRASARLTVLLRHLGCRSAGTIIAHHTSGVGSLASFHPQQFQYTRENNVLSLEQRKFYEENGFLVIKNLVSDADIQRFRNEFERICRKEVKPLGLSVMRDVTITKSEYVPSEKVVSKVQDFQEDEELFRYCTLPEILKYVECFTGPNIMAMHTMLINKPPDSGKKTSRHPLHQDLHYFPFRPSNSIVCAWTAMEHIDRNNGCLVVLPGTHKGPLQPHDYPQWEGGVNIMFHGIQDYDKNNARVHLVMEKGDTVFFHPLLIHGSGRNKSQGFRKAISCHFADANCHYIDVEGTSQENIEKEVVDIVRKKYGFKDVTLKDVWTFRGRVVKGERINL.

A peroxisome-targeting transit peptide spans 1 to 30; sequence MDRNRASARLTVLLRHLGCRSAGTIIAHHT. 2 positions are modified to N6-succinyllysine: K59 and K108. Residues K120, M157, 175 to 177, and W193 contribute to the 2-oxoglutarate site; that span reads HQD. Fe cation is bound by residues H175 and D177. The residue at position 252 (K252) is an N6-succinyllysine. H264 is a Fe cation binding site. S266 and R275 together coordinate 2-oxoglutarate.

The protein belongs to the PhyH family. In terms of assembly, interacts with FKBP52 and PHYHIP. Fe cation is required as a cofactor. L-ascorbate serves as cofactor. Requires ATP as cofactor. It depends on Mg(2+) as a cofactor.

It localises to the peroxisome. The catalysed reaction is phytanoyl-CoA + 2-oxoglutarate + O2 = 2-hydroxyphytanoyl-CoA + succinate + CO2. It carries out the reaction 3-methylhexadecanoyl-CoA + 2-oxoglutarate + O2 = 2-hydroxy-3-methylhexadecanoyl-CoA + succinate + CO2. It catalyses the reaction hexadecanoyl-CoA + 2-oxoglutarate + O2 = 2-hydroxyhexadecanoyl-CoA + succinate + CO2. The enzyme catalyses octanoyl-CoA + 2-oxoglutarate + O2 = 2-hydroxyoctanoyl-CoA + succinate + CO2. The catalysed reaction is decanoyl-CoA + 2-oxoglutarate + O2 = 2-hydroxydecanoyl-CoA + succinate + CO2. It carries out the reaction 3-methylbutanoyl-CoA + 2-oxoglutarate + O2 = 2-hydroxy-3-methylbutanoyl-CoA + succinate + CO2. It catalyses the reaction heptadecanoyl-CoA + 2-oxoglutarate + O2 = 2-hydroxyheptadecanoyl-CoA + succinate + CO2. The enzyme catalyses eicosanoyl-CoA + 2-oxoglutarate + O2 = 2-hydroxyeicosanoyl-CoA + succinate + CO2. The catalysed reaction is octadecanoyl-CoA + 2-oxoglutarate + O2 = 2-hydroxyoctadecanoyl-CoA + succinate + CO2. It carries out the reaction dodecanoyl-CoA + 2-oxoglutarate + O2 = 2-hydroxydodecanoyl-CoA + succinate + CO2. It catalyses the reaction tetradecanoyl-CoA + 2-oxoglutarate + O2 = 2-hydroxytetradecanoyl-CoA + succinate + CO2. The enzyme catalyses hexanoyl-CoA + 2-oxoglutarate + O2 = 2-hydroxyhexanoyl-CoA + succinate + CO2. The catalysed reaction is butanoyl-CoA + 2-oxoglutarate + O2 = 2-hydroxybutanoyl-CoA + succinate + CO2. It carries out the reaction 3-methylnonanoyl-CoA + 2-oxoglutarate + O2 = 2-hydroxy-3-methylnonanoyl-CoA + succinate + CO2. It catalyses the reaction 3-methylundecanoyl-CoA + 2-oxoglutarate + O2 = 2-hydroxy-3-methylundecanoyl-CoA + succinate + CO2. The enzyme catalyses 3-methyldodecanoyl-CoA + 2-oxoglutarate + O2 = 2-hydroxy-3-methyldodecanoyl-CoA + succinate + CO2. The protein operates within lipid metabolism; fatty acid metabolism. In terms of biological role, catalyzes the 2-hydroxylation of not only racemic phytanoyl-CoA and the isomers of 3-methylhexadecanoyl-CoA, but also a variety of other mono- branched 3-methylacyl-CoA esters (with a chain length of at least seven carbon atoms) and straight-chain acyl-CoA esters (with a chain length longer than four carbon atoms). Does not hydroxylate long and very long straight chain acyl-CoAs or 2-methyl-and 4-methyl-branched acyl-CoAs. This chain is Phytanoyl-CoA dioxygenase, peroxisomal (PHYH), found in Bos taurus (Bovine).